Consider the following 449-residue polypeptide: HSPB1-associated protein 1 homolog (449 aa).

One can recognise a JmjC domain in the interval Trp-102–Thr-266. Residues Asp-385 to Leu-395 show a composition bias toward basic and acidic residues. Residues Asp-385–Met-416 are disordered. Residues Gly-396–Pro-410 show a composition bias toward polar residues.

It localises to the cytoplasm. Its function is as follows. May play a role in cellular stress response. The protein is HSPB1-associated protein 1 homolog (hspbap1) of Danio rerio (Zebrafish).